The sequence spans 376 residues: N-acetyldiaminopimelate deacetylase (376 aa).

The active site involves aspartate 69. Glutamate 128 functions as the Proton acceptor in the catalytic mechanism.

It belongs to the peptidase M20A family. N-acetyldiaminopimelate deacetylase subfamily.

The enzyme catalyses N-acetyl-(2S,6S)-2,6-diaminopimelate + H2O = (2S,6S)-2,6-diaminopimelate + acetate. It participates in amino-acid biosynthesis; L-lysine biosynthesis via DAP pathway; LL-2,6-diaminopimelate from (S)-tetrahydrodipicolinate (acetylase route): step 3/3. Functionally, catalyzes the conversion of N-acetyl-diaminopimelate to diaminopimelate and acetate. This chain is N-acetyldiaminopimelate deacetylase, found in Streptococcus pneumoniae (strain JJA).